The following is a 371-amino-acid chain: Aminomethyltransferase (371 aa).

This sequence belongs to the GcvT family. In terms of assembly, the glycine cleavage system is composed of four proteins: P, T, L and H.

The enzyme catalyses N(6)-[(R)-S(8)-aminomethyldihydrolipoyl]-L-lysyl-[protein] + (6S)-5,6,7,8-tetrahydrofolate = N(6)-[(R)-dihydrolipoyl]-L-lysyl-[protein] + (6R)-5,10-methylene-5,6,7,8-tetrahydrofolate + NH4(+). In terms of biological role, the glycine cleavage system catalyzes the degradation of glycine. The polypeptide is Aminomethyltransferase (Pectobacterium atrosepticum (strain SCRI 1043 / ATCC BAA-672) (Erwinia carotovora subsp. atroseptica)).